Here is a 280-residue protein sequence, read N- to C-terminus: Energy-coupling factor transporter ATP-binding protein EcfA1 (280 aa).

Residues 6 to 241 (LRTENISFQY…SHMLQEIGLD (236 aa)) form the ABC transporter domain. 40–47 (GQNGSGKS) serves as a coordination point for ATP.

The protein belongs to the ABC transporter superfamily. Energy-coupling factor EcfA family. As to quaternary structure, forms a stable energy-coupling factor (ECF) transporter complex composed of 2 membrane-embedded substrate-binding proteins (S component), 2 ATP-binding proteins (A component) and 2 transmembrane proteins (T component).

It localises to the cell membrane. ATP-binding (A) component of a common energy-coupling factor (ECF) ABC-transporter complex. Unlike classic ABC transporters this ECF transporter provides the energy necessary to transport a number of different substrates. In Bacillus cereus (strain ZK / E33L), this protein is Energy-coupling factor transporter ATP-binding protein EcfA1.